Reading from the N-terminus, the 310-residue chain is Olfactory receptor 5W2 (310 aa).

Over 1 to 25 (MDWENCSSLTDFFLLGITNNPEMKV) the chain is Extracellular. Asn5 carries N-linked (GlcNAc...) asparagine glycosylation. A helical membrane pass occupies residues 26 to 46 (TLFAVFLAVYIINFSANLGMI). Residues 47–54 (VLIRMDYQ) lie on the Cytoplasmic side of the membrane. Residues 55-75 (LHTPMYFFLSHLSFCDLCYST) traverse the membrane as a helical segment. Topologically, residues 76-99 (ATGPKMLVDLLAKNKSIPFYGCAL) are extracellular. Residues 100–120 (QFLVFCIFADSECLLLSVMAF) form a helical membrane-spanning segment. Residues 121–139 (DRYKAIINPLLYTVNMSSR) lie on the Cytoplasmic side of the membrane. The helical transmembrane segment at 140–160 (VCYLLLTGVYLVGIADALIHM) threads the bilayer. The Extracellular segment spans residues 161 to 196 (TLAFRLCFCGSNEINHFFCDIPPLLLLSRSDTQVNE). A helical transmembrane segment spans residues 197–217 (LVLFTVFGFIELSTISGVFIS). At 218–237 (YCYIILSVLEIHSAEGRFKA) the chain is on the cytoplasmic side. A helical membrane pass occupies residues 238 to 258 (LSTCTSHLSAVAIFQGTLLFM). Over 259-271 (YFRPSSSYSLDQD) the chain is Extracellular. A helical membrane pass occupies residues 272–292 (KMTSLFYTLVVPMLNPLIYSL). Topologically, residues 293–310 (RNKDVKEALKKLKNKILF) are cytoplasmic.

It belongs to the G-protein coupled receptor 1 family.

The protein resides in the cell membrane. Odorant receptor. The sequence is that of Olfactory receptor 5W2 (OR5W2) from Homo sapiens (Human).